Consider the following 130-residue polypeptide: Small ribosomal subunit protein uS9 (130 aa).

The segment at 104–130 (LTRDPRMKERKKYGLKKARRAPQFSKR) is disordered. A compositionally biased stretch (basic residues) spans 111–130 (KERKKYGLKKARRAPQFSKR).

It belongs to the universal ribosomal protein uS9 family.

The polypeptide is Small ribosomal subunit protein uS9 (Ruminiclostridium cellulolyticum (strain ATCC 35319 / DSM 5812 / JCM 6584 / H10) (Clostridium cellulolyticum)).